Reading from the N-terminus, the 156-residue chain is Endogenous retrovirus group K member 21 Pro protein (156 aa).

The Peptidase A2 domain maps to 21-96 (FEGLVDTGAD…IPLNLWGRDL (76 aa)). D26 is a catalytic residue. The G-patch domain maps to 111 to 156 (YSPTSQKIMTKMGYIPGKGLGKNEDGIKVPVEAKINQKREGIGYPF).

This sequence belongs to the peptidase A2 family. HERV class-II K(HML-2) subfamily. Active as a homodimer. Autoproteolytically processed at the N-terminus. Expected C-terminal autoprocessing not detected. The sequence shown is that of the processed Pro protein.

The catalysed reaction is Processing at the authentic HIV-1 PR recognition site and release of the mature p17 matrix and the p24 capsid protein, as a result of the cleavage of the -SQNY-|-PIVQ- cleavage site.. Functionally, retroviral proteases have roles in the processing of the primary translation products and the maturation of the viral particle. Endogenous Pro proteins may have kept, lost or modified their original function during evolution. The sequence is that of Endogenous retrovirus group K member 21 Pro protein (ERVK-21) from Homo sapiens (Human).